Consider the following 310-residue polypeptide: Methionyl-tRNA formyltransferase (310 aa).

110–113 (SVLP) serves as a coordination point for (6S)-5,6,7,8-tetrahydrofolate. Residues 283 to 310 (TVQPPGKKSMNAADWARGARAEDIRRAR) form a disordered region. Positions 299 to 310 (RGARAEDIRRAR) are enriched in basic and acidic residues.

Belongs to the Fmt family.

It catalyses the reaction L-methionyl-tRNA(fMet) + (6R)-10-formyltetrahydrofolate = N-formyl-L-methionyl-tRNA(fMet) + (6S)-5,6,7,8-tetrahydrofolate + H(+). Attaches a formyl group to the free amino group of methionyl-tRNA(fMet). The formyl group appears to play a dual role in the initiator identity of N-formylmethionyl-tRNA by promoting its recognition by IF2 and preventing the misappropriation of this tRNA by the elongation apparatus. In Mycolicibacterium gilvum (strain PYR-GCK) (Mycobacterium gilvum (strain PYR-GCK)), this protein is Methionyl-tRNA formyltransferase.